Here is a 540-residue protein sequence, read N- to C-terminus: GMP synthase [glutamine-hydrolyzing] (540 aa).

The Glutamine amidotransferase type-1 domain maps to 26-216 (IIIILDFGSQ…VYHICECEPT (191 aa)). Residue Cys103 is the Nucleophile of the active site. Residues His190 and Glu192 contribute to the active site. Residues 217-415 (WTTAAFVEEA…VGLPEEIVQR (199 aa)) form the GMPS ATP-PPase domain. 244-250 (SGGVDSS) contacts ATP.

In terms of assembly, homodimer.

It carries out the reaction XMP + L-glutamine + ATP + H2O = GMP + L-glutamate + AMP + diphosphate + 2 H(+). It functions in the pathway purine metabolism; GMP biosynthesis; GMP from XMP (L-Gln route): step 1/1. Catalyzes the synthesis of GMP from XMP. This Nostoc sp. (strain PCC 7120 / SAG 25.82 / UTEX 2576) protein is GMP synthase [glutamine-hydrolyzing].